The primary structure comprises 95 residues: Aspartyl/glutamyl-tRNA(Asn/Gln) amidotransferase subunit C (95 aa).

This sequence belongs to the GatC family. In terms of assembly, heterotrimer of A, B and C subunits.

The catalysed reaction is L-glutamyl-tRNA(Gln) + L-glutamine + ATP + H2O = L-glutaminyl-tRNA(Gln) + L-glutamate + ADP + phosphate + H(+). It carries out the reaction L-aspartyl-tRNA(Asn) + L-glutamine + ATP + H2O = L-asparaginyl-tRNA(Asn) + L-glutamate + ADP + phosphate + 2 H(+). Its function is as follows. Allows the formation of correctly charged Asn-tRNA(Asn) or Gln-tRNA(Gln) through the transamidation of misacylated Asp-tRNA(Asn) or Glu-tRNA(Gln) in organisms which lack either or both of asparaginyl-tRNA or glutaminyl-tRNA synthetases. The reaction takes place in the presence of glutamine and ATP through an activated phospho-Asp-tRNA(Asn) or phospho-Glu-tRNA(Gln). In Campylobacter fetus subsp. fetus (strain 82-40), this protein is Aspartyl/glutamyl-tRNA(Asn/Gln) amidotransferase subunit C.